We begin with the raw amino-acid sequence, 398 residues long: Glycosyltransferase GlyF (398 aa).

The segment at 1–259 (MRKSIVLAAD…SEIAFQRSDL (259 aa)) is GT8 domain. UDP contacts are provided by residues 8-13 (AADNAY) and 101-102 (DS). Mn(2+)-binding residues include Asp-101, Asp-103, and His-221. 221 to 227 (HYASHDK) contributes to the UDP binding site.

In the N-terminal section; belongs to the glycosyltransferase 8 family.

In terms of biological role, may be involved in the polymorphic O-glycosylation of the serine-rich repeat protein PsrP. Has hydrolytic activity against UDP-galactose and to a lesser extent against UDP-glucose; no glycosyltransferase activity has been seen with tested substrates. The sequence is that of Glycosyltransferase GlyF from Streptococcus pneumoniae serotype 4 (strain ATCC BAA-334 / TIGR4).